We begin with the raw amino-acid sequence, 728 residues long: Catalase-peroxidase (728 aa).

A cross-link (tryptophyl-tyrosyl-methioninium (Trp-Tyr) (with M-244)) is located at residues 91-218 (WHSAGTYRTA…LAAVQMGLIY (128 aa)). The active-site Proton acceptor is histidine 92. Positions 218–244 (YVNPEGPDGTPDPVAAAHDIRETFARM) form a cross-link, tryptophyl-tyrosyl-methioninium (Tyr-Met) (with W-91). A heme b-binding site is contributed by histidine 259.

The protein belongs to the peroxidase family. Peroxidase/catalase subfamily. Homodimer or homotetramer. Heme b is required as a cofactor. Formation of the three residue Trp-Tyr-Met cross-link is important for the catalase, but not the peroxidase activity of the enzyme.

It catalyses the reaction H2O2 + AH2 = A + 2 H2O. It carries out the reaction 2 H2O2 = O2 + 2 H2O. Bifunctional enzyme with both catalase and broad-spectrum peroxidase activity. This is Catalase-peroxidase from Burkholderia lata (strain ATCC 17760 / DSM 23089 / LMG 22485 / NCIMB 9086 / R18194 / 383).